Consider the following 411-residue polypeptide: Heparan-sulfate 6-O-sulfotransferase 1 (411 aa).

Over 1 to 19 the chain is Cytoplasmic; that stretch reads MRRRRAGGRTMVERASKFV. Residues 20 to 37 traverse the membrane as a helical; Signal-anchor for type II membrane protein segment; sequence LVVAGSACFMLILYQYAG. Residues 38–411 lie on the Lumenal side of the membrane; that stretch reads PGLSLGAPGG…DYMSHIIEKW (374 aa). 93–101 contributes to the 3'-phosphoadenylyl sulfate binding site; that stretch reads HIQKTGGTT. Residues 123–124, arginine 140, tryptophan 145, and histidine 150 each bind substrate; that span reads KK. Residue histidine 150 is the Proton acceptor of the active site. Positions 185 and 193 each coordinate 3'-phosphoadenylyl sulfate. Substrate contacts are provided by histidine 197 and tryptophan 204. Residue asparagine 264 is glycosylated (N-linked (GlcNAc...) asparagine). 317-319 contacts 3'-phosphoadenylyl sulfate; that stretch reads MQY. Asparagine 320 is a glycosylation site (N-linked (GlcNAc...) asparagine). 323–324 serves as a coordination point for 3'-phosphoadenylyl sulfate; the sequence is RA. The stretch at 352–386 forms a coiled coil; that stretch reads KDLFQQRYQYKRQLERREQRLRNREERLLHRSKEA. The tract at residues 380–401 is disordered; the sequence is LHRSKEALPREDPEEPGRVPTE.

This sequence belongs to the sulfotransferase 6 family. N-glycosylated. Expressed in fetal brain and liver.

The protein resides in the membrane. The enzyme catalyses alpha-D-glucosaminyl-[heparan sulfate](n) + 3'-phosphoadenylyl sulfate = 6-sulfo-alpha-D-glucosaminyl-[heparan sulfate](n) + adenosine 3',5'-bisphosphate + H(+). Its function is as follows. 6-O-sulfation enzyme which catalyzes the transfer of sulfate from 3'-phosphoadenosine 5'-phosphosulfate (PAPS) to position 6 of the N-sulfoglucosamine residue (GlcNS) of heparan sulfate. Critical for normal neuronal development where it may play a role in neuron branching. May also play a role in limb development. May prefer iduronic acid. This Mus musculus (Mouse) protein is Heparan-sulfate 6-O-sulfotransferase 1.